Reading from the N-terminus, the 463-residue chain is Argininosuccinate lyase (463 aa).

Belongs to the lyase 1 family. Argininosuccinate lyase subfamily.

It localises to the cytoplasm. It carries out the reaction 2-(N(omega)-L-arginino)succinate = fumarate + L-arginine. Its pathway is amino-acid biosynthesis; L-arginine biosynthesis; L-arginine from L-ornithine and carbamoyl phosphate: step 3/3. The polypeptide is Argininosuccinate lyase (Streptococcus pneumoniae (strain 70585)).